The following is a 162-amino-acid chain: Endoribonuclease YbeY (162 aa).

Residues H117, H121, and H127 each coordinate Zn(2+).

It belongs to the endoribonuclease YbeY family. The cofactor is Zn(2+).

It is found in the cytoplasm. Its function is as follows. Single strand-specific metallo-endoribonuclease involved in late-stage 70S ribosome quality control and in maturation of the 3' terminus of the 16S rRNA. The sequence is that of Endoribonuclease YbeY from Francisella tularensis subsp. mediasiatica (strain FSC147).